Consider the following 391-residue polypeptide: MATKTCYYEVLKVERTATKQQVDRAYRKLAIKYHPDSNRDDGSATAKFKEATEAYEVLSDANKRARYDQYGHAGVEGATQQYGDVEDIFEAFGDLFGGGFGDFFGGGSRRGGGRRRVRRGADVRCDVTLTLEEAARGCHKDIVFRRRVSCDTCDGSGAAAGSEPVTCTMCGGQGQVIQSAGILRVQTTCPTCKGAGKQIGEPCGKCRGTGTQNEKAEMNVEIPAGVDDGMRVRLQGEGEPSPDGGPNGDCYCFISVKEHNLFKREGQHLILQMPISYAQAALGATINVPTLDGPHELTVPAGTQTGHVFTVRGQGIVDPRSGRTGDLLVQIFIEVPKKLSDKQQKLLRELAELDHDSVLPERTSFLDKLRHFFDPEPEEAGTGSTDTEKDS.

A J domain is found at 6–71 (CYYEVLKVER…NKRARYDQYG (66 aa)). The segment at 137-215 (GCHKDIVFRR…CRGTGTQNEK (79 aa)) adopts a CR-type zinc-finger fold. The Zn(2+) site is built by cysteine 150, cysteine 153, cysteine 167, cysteine 170, cysteine 189, cysteine 192, cysteine 203, and cysteine 206. CXXCXGXG motif repeat units follow at residues 150–157 (CDTCDGSG), 167–174 (CTMCGGQG), 189–196 (CPTCKGAG), and 203–210 (CGKCRGTG). The segment at 372-391 (FFDPEPEEAGTGSTDTEKDS) is disordered.

Belongs to the DnaJ family. In terms of assembly, homodimer. Zn(2+) serves as cofactor.

The protein resides in the cytoplasm. Participates actively in the response to hyperosmotic and heat shock by preventing the aggregation of stress-denatured proteins and by disaggregating proteins, also in an autonomous, DnaK-independent fashion. Unfolded proteins bind initially to DnaJ; upon interaction with the DnaJ-bound protein, DnaK hydrolyzes its bound ATP, resulting in the formation of a stable complex. GrpE releases ADP from DnaK; ATP binding to DnaK triggers the release of the substrate protein, thus completing the reaction cycle. Several rounds of ATP-dependent interactions between DnaJ, DnaK and GrpE are required for fully efficient folding. Also involved, together with DnaK and GrpE, in the DNA replication of plasmids through activation of initiation proteins. This chain is Chaperone protein DnaJ, found in Rhodopirellula baltica (strain DSM 10527 / NCIMB 13988 / SH1).